The primary structure comprises 534 residues: Putative fimbrium tip subunit Fim1C (534 aa).

The first 21 residues, 1-21 (MKQYKLMQVALLAILLFGWAG), serve as a signal peptide directing secretion. C22 is lipidated: N-palmitoyl cysteine. C22 is lipidated: S-diacylglycerol cysteine. Residues 22 to 54 (CSQNEEEVPGNVRNGIVLNVTDTGIISNEPSTR) constitute a propeptide that is removed on maturation.

This sequence belongs to the bacteroidetes fimbrillin superfamily. Mfa-like family. May be part of the fimbrial tip.

The protein resides in the fimbrium. Its subcellular location is the cell outer membrane. In terms of biological role, probably a component of the fimbrium tip. Fimbriae are filamentous appendages on the cell surface that mediate cell adhesion and biofilm formation. The sequence is that of Putative fimbrium tip subunit Fim1C from Bacteroides ovatus (strain ATCC 8483 / DSM 1896 / JCM 5824 / BCRC 10623 / CCUG 4943 / NCTC 11153).